The sequence spans 154 residues: SsrA-binding protein (154 aa).

Residues 130-154 (KLHDKRETERRRQDQRDIQRAIKRA) are disordered. Residues 133–154 (DKRETERRRQDQRDIQRAIKRA) are compositionally biased toward basic and acidic residues.

The protein belongs to the SmpB family.

The protein resides in the cytoplasm. Functionally, required for rescue of stalled ribosomes mediated by trans-translation. Binds to transfer-messenger RNA (tmRNA), required for stable association of tmRNA with ribosomes. tmRNA and SmpB together mimic tRNA shape, replacing the anticodon stem-loop with SmpB. tmRNA is encoded by the ssrA gene; the 2 termini fold to resemble tRNA(Ala) and it encodes a 'tag peptide', a short internal open reading frame. During trans-translation Ala-aminoacylated tmRNA acts like a tRNA, entering the A-site of stalled ribosomes, displacing the stalled mRNA. The ribosome then switches to translate the ORF on the tmRNA; the nascent peptide is terminated with the 'tag peptide' encoded by the tmRNA and targeted for degradation. The ribosome is freed to recommence translation, which seems to be the essential function of trans-translation. The protein is SsrA-binding protein of Synechococcus elongatus (strain ATCC 33912 / PCC 7942 / FACHB-805) (Anacystis nidulans R2).